Reading from the N-terminus, the 348-residue chain is Isopentenyl-diphosphate delta-isomerase (348 aa).

Position 9–10 (9–10) interacts with substrate; it reads RK. Residues 68–70, Ser-98, and Asn-127 contribute to the FMN site; that span reads AMT. Gln-157 is a substrate binding site. Glu-158 provides a ligand contact to Mg(2+). Residues Lys-188, Ser-213, Thr-218, and 286-287 each bind FMN; that span reads AG.

The protein belongs to the IPP isomerase type 2 family. In terms of assembly, homooctamer. Dimer of tetramers. Requires FMN as cofactor. NADPH serves as cofactor. The cofactor is Mg(2+).

It localises to the cytoplasm. The catalysed reaction is isopentenyl diphosphate = dimethylallyl diphosphate. Functionally, involved in the biosynthesis of isoprenoids. Catalyzes the 1,3-allylic rearrangement of the homoallylic substrate isopentenyl (IPP) to its allylic isomer, dimethylallyl diphosphate (DMAPP). The chain is Isopentenyl-diphosphate delta-isomerase from Limosilactobacillus reuteri subsp. reuteri (strain JCM 1112) (Lactobacillus reuteri).